A 496-amino-acid polypeptide reads, in one-letter code: Anaerobic nitric oxide reductase flavorubredoxin (496 aa).

The tract at residues 30-210 is zinc metallo-hydrolase; that stretch reads TKGTSYNSYL…PFSALVTAKI (181 aa). The Fe cation site is built by His79, Glu81, Asp83, His147, Asp166, and His227. Residues 254-393 form the Flavodoxin-like domain; it reads ITIFYDSMSN…LCREHGQFIA (140 aa). FMN contacts are provided by residues 260–264 and 342–369; these read SMSNN and AFGSYGWNGGAVDRIHSRLTDAGFETAV. The Rubredoxin-like domain occupies 444–495; sequence KQCMLCSVCNWVYDPEIGEPNQGVEPNTPWSSVPNDFLCPECHLGKDVFVEI. Residues Cys449, Cys452, Cys482, and Cys485 each coordinate Fe cation.

This sequence in the N-terminal section; belongs to the zinc metallo-hydrolase group 3 family. In terms of assembly, homotetramer. Fe cation is required as a cofactor. The cofactor is FMN.

The protein resides in the cytoplasm. It functions in the pathway nitrogen metabolism; nitric oxide reduction. Its function is as follows. Anaerobic nitric oxide reductase; uses NADH to detoxify nitric oxide (NO), protecting several 4Fe-4S NO-sensitive enzymes. Has at least 2 reductase partners, only one of which (NorW, flavorubredoxin reductase) has been identified. NO probably binds to the di-iron center; electrons enter from the NorW at rubredoxin and are transferred sequentially to the FMN center and the di-iron center. Also able to function as an aerobic oxygen reductase. The protein is Anaerobic nitric oxide reductase flavorubredoxin of Aliivibrio fischeri (strain ATCC 700601 / ES114) (Vibrio fischeri).